The chain runs to 451 residues: Exodeoxyribonuclease 7 large subunit (451 aa).

Belongs to the XseA family. In terms of assembly, heterooligomer composed of large and small subunits.

It is found in the cytoplasm. It catalyses the reaction Exonucleolytic cleavage in either 5'- to 3'- or 3'- to 5'-direction to yield nucleoside 5'-phosphates.. Functionally, bidirectionally degrades single-stranded DNA into large acid-insoluble oligonucleotides, which are then degraded further into small acid-soluble oligonucleotides. In Neisseria meningitidis serogroup C / serotype 2a (strain ATCC 700532 / DSM 15464 / FAM18), this protein is Exodeoxyribonuclease 7 large subunit.